Here is a 603-residue protein sequence, read N- to C-terminus: Elongation factor 4 (603 aa).

Residues 7–191 enclose the tr-type G domain; it reads DNIRNFSIVA…AIVTRLPPPK (185 aa). GTP-binding positions include 19-24 and 138-141; these read DHGKST and NKVD.

Belongs to the TRAFAC class translation factor GTPase superfamily. Classic translation factor GTPase family. LepA subfamily.

It is found in the cell inner membrane. The enzyme catalyses GTP + H2O = GDP + phosphate + H(+). Functionally, required for accurate and efficient protein synthesis under certain stress conditions. May act as a fidelity factor of the translation reaction, by catalyzing a one-codon backward translocation of tRNAs on improperly translocated ribosomes. Back-translocation proceeds from a post-translocation (POST) complex to a pre-translocation (PRE) complex, thus giving elongation factor G a second chance to translocate the tRNAs correctly. Binds to ribosomes in a GTP-dependent manner. The polypeptide is Elongation factor 4 (Rhodopseudomonas palustris (strain ATCC BAA-98 / CGA009)).